The sequence spans 1073 residues: MLGDGKEGTSTIPGFNQIQFEGFYRFIDQGLIEEVSKFPKIEDIDQEIEFQLFVETYQLVEPLIKERDAVYESLTYSSELYVSAGLIWKTSRNMQEQRIFIGNIPLMNSLGTSIVNGIYRIVINQILQSPGIYYQSELDHNGISVYTGTIISDWGGRLELEIDKKARIWARVSRKQKISILVLSSAMGLNLREILENVCYPEIFLSFLTDKEKKQIGSKENAILEFYQQFSCVGGDPIFSESLCKELQKKFFHQRCELGRIGRRNINWRLNLTIPQNNIFLLPRDILAAADHLIGMKFGMGTLDDMNHLQNKRIRSVADLLQDQFGLALARLENVVKGTICGAIKHKLIPTPQNLVTATPLTTTYESFFGLHPLSQVLDRTNPLTQIVHGRKLSYLGPGGLTGRTANFRIRDIHPSHYGRICPIDTSEGINVGLIGSLAIHARIGDWGSLESPFYELFEKSKKARIRMLFLSPSQDEYYMIAAGNSLALNRGIQEEQAVPARYRQEFLTIAWEEVHLRSIFPFQYFSIGASLIPFIEHNDANRALMSSNMQRQAVPLSRSEKCIVGTGLERQVALDSGVPAIAEQEGKILYTDTKKIILSGYGDNTLGIPLIRYQRSNKNTCMHQKPQVRRGKCIKKGQILADGAATVGGELALGKNILVGYMPWEGYNFEDAVLISECLVYGNIYTSFHIRKYEIQTHVTTQGPERITKEIPHLEGRLLRNLDKNGIVMLGSWVETGDILVGKLTPQVAKESSYAPEDRLLRAILGIQVSTSKETCLKLPIGGRGRVIDVRWVQKKGGSSYNPEKIRVYISQKREIKVGDKVAGRHGNKGIISKILPRQDMPYLQDGRPVDMVFNPLGVPSRMNVGQIFECSLGLAGSLLDRHYRIAPFDERYEQEASRKLVFSELYEASKQTANPWVFEPEYPGKSRIFDGRTGDPFEQPVIIGKPYILKLIHQVDDKIHGRSSGHYALVTQQPLRGRSKQGGQRVGEMEVWALEGFGVAHILQEMLTYKSDHIRARQEVLGTTIIGGTIPKPEDAPESFRLLVRELRSLALDLNHFLVSEKNFQINRKEV.

This sequence belongs to the RNA polymerase beta chain family. In plastids the minimal PEP RNA polymerase catalytic core is composed of four subunits: alpha, beta, beta', and beta''. When a (nuclear-encoded) sigma factor is associated with the core the holoenzyme is formed, which can initiate transcription.

Its subcellular location is the plastid. The protein localises to the chloroplast. It catalyses the reaction RNA(n) + a ribonucleoside 5'-triphosphate = RNA(n+1) + diphosphate. In terms of biological role, DNA-dependent RNA polymerase catalyzes the transcription of DNA into RNA using the four ribonucleoside triphosphates as substrates. The polypeptide is DNA-directed RNA polymerase subunit beta (Aethionema cordifolium (Lebanon stonecress)).